Consider the following 183-residue polypeptide: Adenine phosphoribosyltransferase (183 aa).

Belongs to the purine/pyrimidine phosphoribosyltransferase family. As to quaternary structure, homodimer.

Its subcellular location is the cytoplasm. It catalyses the reaction AMP + diphosphate = 5-phospho-alpha-D-ribose 1-diphosphate + adenine. It participates in purine metabolism; AMP biosynthesis via salvage pathway; AMP from adenine: step 1/1. Its function is as follows. Catalyzes a salvage reaction resulting in the formation of AMP, that is energically less costly than de novo synthesis. The protein is Adenine phosphoribosyltransferase of Shewanella sp. (strain MR-7).